We begin with the raw amino-acid sequence, 198 residues long: Holliday junction branch migration complex subunit RuvA (198 aa).

The tract at residues 1-63 is domain I; the sequence is MYDYIKGQLT…EDAHLLFGFH (63 aa). A domain II region spans residues 64–142; sequence TEDEKDVFLK…EAPQETGNTK (79 aa). The segment at 143–147 is flexible linker; that stretch reads ARSNK. The domain III stretch occupies residues 148-198; the sequence is AGNTQLDEAIEALLALGYKAAELKKIRAFFEGTSETAEQYIKSALKLLMKG.

Belongs to the RuvA family. In terms of assembly, homotetramer. Forms an RuvA(8)-RuvB(12)-Holliday junction (HJ) complex. HJ DNA is sandwiched between 2 RuvA tetramers; dsDNA enters through RuvA and exits via RuvB. An RuvB hexamer assembles on each DNA strand where it exits the tetramer. Each RuvB hexamer is contacted by two RuvA subunits (via domain III) on 2 adjacent RuvB subunits; this complex drives branch migration. In the full resolvosome a probable DNA-RuvA(4)-RuvB(12)-RuvC(2) complex forms which resolves the HJ.

It localises to the cytoplasm. Its function is as follows. The RuvA-RuvB-RuvC complex processes Holliday junction (HJ) DNA during genetic recombination and DNA repair, while the RuvA-RuvB complex plays an important role in the rescue of blocked DNA replication forks via replication fork reversal (RFR). RuvA specifically binds to HJ cruciform DNA, conferring on it an open structure. The RuvB hexamer acts as an ATP-dependent pump, pulling dsDNA into and through the RuvAB complex. HJ branch migration allows RuvC to scan DNA until it finds its consensus sequence, where it cleaves and resolves the cruciform DNA. This is Holliday junction branch migration complex subunit RuvA from Streptococcus pyogenes serotype M28 (strain MGAS6180).